A 573-amino-acid chain; its full sequence is Sterol esterase 1 (573 aa).

Topologically, residues 1 to 12 (MGVSAVLKRARN) are cytoplasmic. The stretch at 13 to 33 (LLATFIVCCFMAVVLVLALAH) is an intramembrane region. Residues 34 to 573 (HFINEHRDTR…TELEMVAEKA (540 aa)) are Cytoplasmic-facing. S315 (nucleophile) is an active-site residue. Active-site charge relay system residues include D489 and H520.

The protein belongs to the AB hydrolase superfamily. Not N-glycosylated.

The protein resides in the lipid droplet. The protein localises to the membrane. The catalysed reaction is a sterol ester + H2O = a sterol + a fatty acid + H(+). Functionally, mediates the hydrolysis of steryl esters, thereby playing a central role in lipid metabolism. Under heme-deficient conditions, it constitutes the major steryl ester hydrolase, suggesting that it plays a central role in mobilization of steryl esters under anaerobic conditions. This is Sterol esterase 1 (YEH1) from Saccharomyces cerevisiae (strain ATCC 204508 / S288c) (Baker's yeast).